The sequence spans 441 residues: Interferon-related developmental regulator 2 (441 aa).

A compositionally biased stretch (basic residues) spans 1–15 (MPRARKGNALRKGGQ). Residues 1–51 (MPRARKGNALRKGGQRRGGGARSSTQADSGSSEDEAASEARSTTSDCPSLL) are disordered.

The protein belongs to the IFRD family. As to quaternary structure, associates with ribosomes; promoting ribosome inactivation.

In terms of biological role, ribosome-binding protein that acts as an inhibitor of mRNA translation by promoting ribosome inactivation. Associates with the P- and E-sites of the ribosome and inserts a C-terminal helix into the mRNA exit channel to preclude translation. The protein is Interferon-related developmental regulator 2 of Mus musculus (Mouse).